Consider the following 310-residue polypeptide: Olfactory receptor 9A2 (310 aa).

The Extracellular portion of the chain corresponds to 1-24 (MMDNHSSATEFHLLGFPGSQGLHH). The N-linked (GlcNAc...) asparagine glycan is linked to Asn4. Residues 25 to 45 (ILFAIFFFFYLVTLMGNTVII) form a helical membrane-spanning segment. The Cytoplasmic portion of the chain corresponds to 46–53 (VIVCVDKR). The chain crosses the membrane as a helical span at residues 54–74 (LQSPMYFFLSHLSTLEILVTT). Over 75 to 98 (IIVPMMLWGLLFLGCRQYLSLHVS) the chain is Extracellular. Over 117 to 135 (DRYVAVCNPLRYNIIMNSS) the chain is Cytoplasmic. Residues 136 to 156 (TCIWVVIVSWVFGFLSEIWPI) form a helical membrane-spanning segment. The Extracellular portion of the chain corresponds to 157–193 (YATFQFTFRKSNSLDHFYCDRGQLLKLSCDNTLLTEF). Residues 194–213 (ILFLMAVFILIGSLIPTIVS) form a helical membrane-spanning segment. The Cytoplasmic segment spans residues 214-233 (YTYIISTILKIPSASGRRKA). A helical transmembrane segment spans residues 234 to 254 (FSTFASHFTCVVIGYGSCLFL). Topologically, residues 255–267 (YVKPKQTQGVEYN) are extracellular. A helical transmembrane segment spans residues 268 to 288 (KIVSLLVSVLTPFLNPFIFTL). The Cytoplasmic segment spans residues 289 to 310 (RNDKVKEALRDGMKRCCQLLKD).

Belongs to the G-protein coupled receptor 1 family.

Its subcellular location is the cell membrane. Odorant receptor. This Homo sapiens (Human) protein is Olfactory receptor 9A2 (OR9A2).